Consider the following 348-residue polypeptide: Erythronate-4-phosphate dehydrogenase (348 aa).

Threonine 46 and threonine 67 together coordinate substrate. Residue aspartate 147 coordinates NAD(+). Arginine 209 is a catalytic residue. Aspartate 233 serves as a coordination point for NAD(+). Residue glutamate 238 is part of the active site. The active-site Proton donor is histidine 255. Glycine 258 serves as a coordination point for NAD(+). Tyrosine 259 is a binding site for substrate.

It belongs to the D-isomer specific 2-hydroxyacid dehydrogenase family. PdxB subfamily. Homodimer.

It is found in the cytoplasm. It catalyses the reaction 4-phospho-D-erythronate + NAD(+) = (R)-3-hydroxy-2-oxo-4-phosphooxybutanoate + NADH + H(+). It functions in the pathway cofactor biosynthesis; pyridoxine 5'-phosphate biosynthesis; pyridoxine 5'-phosphate from D-erythrose 4-phosphate: step 2/5. In terms of biological role, catalyzes the oxidation of erythronate-4-phosphate to 3-hydroxy-2-oxo-4-phosphonooxybutanoate. This chain is Erythronate-4-phosphate dehydrogenase, found in Bacteroides fragilis (strain ATCC 25285 / DSM 2151 / CCUG 4856 / JCM 11019 / LMG 10263 / NCTC 9343 / Onslow / VPI 2553 / EN-2).